A 99-amino-acid polypeptide reads, in one-letter code: Carboxysome shell vertex protein CcmL (99 aa).

The BMV domain occupies 1-83; sequence MKIARVCGTV…IDAAVVAIID (83 aa).

It belongs to the CcmL/EutN family. CcmL subfamily. As to quaternary structure, homopentamer. May interact with CcmK2, this occurs at very high CcmK2 concentrations. Interacts with full-length CcmM.

The protein localises to the carboxysome. In terms of biological role, probably forms vertices in the carboxysome, a polyhedral inclusion where RuBisCO (ribulose bisphosphate carboxylase, rbcL-rbcS) is sequestered. Has been modeled to induce curvature upon insertion into an otherwise flat hexagonal molecular layer of CcmK subunits. The protein is Carboxysome shell vertex protein CcmL of Thermosynechococcus vestitus (strain NIES-2133 / IAM M-273 / BP-1).